We begin with the raw amino-acid sequence, 325 residues long: Tetraacyldisaccharide 4'-kinase (325 aa).

T58–T65 contributes to the ATP binding site.

This sequence belongs to the LpxK family.

It carries out the reaction a lipid A disaccharide + ATP = a lipid IVA + ADP + H(+). The protein operates within glycolipid biosynthesis; lipid IV(A) biosynthesis; lipid IV(A) from (3R)-3-hydroxytetradecanoyl-[acyl-carrier-protein] and UDP-N-acetyl-alpha-D-glucosamine: step 6/6. Its function is as follows. Transfers the gamma-phosphate of ATP to the 4'-position of a tetraacyldisaccharide 1-phosphate intermediate (termed DS-1-P) to form tetraacyldisaccharide 1,4'-bis-phosphate (lipid IVA). This Coxiella burnetii (strain CbuK_Q154) (Coxiella burnetii (strain Q154)) protein is Tetraacyldisaccharide 4'-kinase.